A 128-amino-acid chain; its full sequence is Large ribosomal subunit protein bL17 (128 aa).

This sequence belongs to the bacterial ribosomal protein bL17 family. As to quaternary structure, part of the 50S ribosomal subunit. Contacts protein L32.

The polypeptide is Large ribosomal subunit protein bL17 (Streptococcus thermophilus (strain ATCC BAA-250 / LMG 18311)).